The following is a 436-amino-acid chain: Trigger factor (436 aa).

In terms of domain architecture, PPIase FKBP-type spans 161–246; that stretch reads EDQLNIDFVG…VNTVSEPKLP (86 aa).

The protein belongs to the FKBP-type PPIase family. Tig subfamily.

The protein resides in the cytoplasm. It carries out the reaction [protein]-peptidylproline (omega=180) = [protein]-peptidylproline (omega=0). Functionally, involved in protein export. Acts as a chaperone by maintaining the newly synthesized protein in an open conformation. Functions as a peptidyl-prolyl cis-trans isomerase. In Pseudomonas syringae pv. syringae (strain B728a), this protein is Trigger factor.